The sequence spans 312 residues: Ribonuclease Z (312 aa).

Zn(2+) is bound by residues histidine 62, histidine 64, aspartate 66, histidine 67, histidine 144, aspartate 215, and histidine 273. Aspartate 66 acts as the Proton acceptor in catalysis.

It belongs to the RNase Z family. In terms of assembly, homodimer. Zn(2+) serves as cofactor.

The enzyme catalyses Endonucleolytic cleavage of RNA, removing extra 3' nucleotides from tRNA precursor, generating 3' termini of tRNAs. A 3'-hydroxy group is left at the tRNA terminus and a 5'-phosphoryl group is left at the trailer molecule.. Functionally, zinc phosphodiesterase, which displays some tRNA 3'-processing endonuclease activity. Probably involved in tRNA maturation, by removing a 3'-trailer from precursor tRNA. The protein is Ribonuclease Z of Prochlorococcus marinus (strain AS9601).